The sequence spans 367 residues: RNA-binding protein 48 (367 aa).

The 79-residue stretch at 46–124 (QYLLIQGVPA…GLLHVCYAPE (79 aa)) folds into the RRM domain. Residues 217–228 (PVDRASDSSKDG) are compositionally biased toward basic and acidic residues. Disordered stretches follow at residues 217–243 (PVDR…HNGS), 277–303 (RTTQ…TNPS), and 339–367 (EVIS…RRRI). The span at 347–356 (PPEDKPEDVN) shows a compositional bias: basic and acidic residues.

It belongs to the RBM48 family. As to quaternary structure, component of the minor spliceosome. Within this complex, interacts with ARMC7 and PRPF8/PRP8.

Functionally, as a component of the minor spliceosome, involved in the splicing of U12-type introns in pre-mRNAs. This chain is RNA-binding protein 48 (RBM48), found in Pongo abelii (Sumatran orangutan).